The primary structure comprises 309 residues: Formimidoylglutamase (309 aa).

Residues His-128, Asp-153, His-155, Asp-157, Cys-240, and Asp-242 each coordinate Mn(2+).

It belongs to the arginase family. Mn(2+) serves as cofactor.

It carries out the reaction N-formimidoyl-L-glutamate + H2O = formamide + L-glutamate. Its pathway is amino-acid degradation; L-histidine degradation into L-glutamate; L-glutamate from N-formimidoyl-L-glutamate (hydrolase route): step 1/1. Its function is as follows. Catalyzes the conversion of N-formimidoyl-L-glutamate to L-glutamate and formamide. The chain is Formimidoylglutamase from Staphylococcus carnosus (strain TM300).